The following is a 505-amino-acid chain: Protein ERGIC-53-like (505 aa).

The first 25 residues, 1–25 (MLEIRGLSPSLCLLSLLLVLHGAER), serve as a signal peptide directing secretion. Topologically, residues 26–438 (SQPPPRRRFE…SGWLLGSSTC (413 aa)) are lumenal. An L-type lectin-like domain is found at 32–254 (RRFEYKLSFK…DVLSFLTFSL (223 aa)). A glycan (N-linked (GlcNAc...) asparagine) is linked at Asn84. Cys177 and Cys216 are joined by a disulfide. A helical membrane pass occupies residues 439–459 (LHTSIFLFFLLLQTVGFFCYV). Residues 460-505 (NFSRQELDKRLQEYLSTGSLSLEPALPITRTIGVLRRQPISPSMQA) are Cytoplasmic-facing.

It localises to the endoplasmic reticulum-Golgi intermediate compartment membrane. The sequence is that of Protein ERGIC-53-like (Lman1l) from Mus musculus (Mouse).